The primary structure comprises 724 residues: Probable serine/threonine-protein kinase KKQ8 (724 aa).

2 disordered regions span residues 1–81 (MVMQ…RQRS) and 93–188 (HPFR…KDIL). Ser19 carries the phosphoserine modification. Low complexity predominate over residues 45-54 (PYRSSSTSPK). Polar residues predominate over residues 95–106 (FRQTGSGASNSP). A compositionally biased stretch (low complexity) spans 143-162 (RSSSVSSCDSSNGTTSSSDS). A phosphoserine mark is found at Ser232, Ser238, and Ser241. The interval 329–355 (SQTNHEKRTGQSPNDSNRSSPTQGRED) is disordered. Polar residues predominate over residues 338–351 (GQSPNDSNRSSPTQ). Residues 412–712 (GHPVGLVGAG…VGKLLDMQWM (301 aa)) enclose the Protein kinase domain. ATP is bound by residues 418–426 (VGAGAYGEV) and Lys455. Asp563 acts as the Proton acceptor in catalysis.

The protein belongs to the protein kinase superfamily. CAMK Ser/Thr protein kinase family. NPR/HAL subfamily. HAL5 sub-subfamily.

It localises to the cytoplasm. The catalysed reaction is L-seryl-[protein] + ATP = O-phospho-L-seryl-[protein] + ADP + H(+). It catalyses the reaction L-threonyl-[protein] + ATP = O-phospho-L-threonyl-[protein] + ADP + H(+). This is Probable serine/threonine-protein kinase KKQ8 (KKQ8) from Saccharomyces cerevisiae (strain ATCC 204508 / S288c) (Baker's yeast).